We begin with the raw amino-acid sequence, 359 residues long: MLDAVIILLSIFTFAGVGFAVVDLLPDSVQMQISNMEALRWLAAGFMSIIGLAIGLVAQTTYRRLENQIRQTPIETILTRAVGLVIGLLIANLMLAPIFLLPIPGEFSFIKPTLAVFGSVVFAFLGISLADTHGRTFMRLINPNSIETMLLAEGTLKPIPPKVVDTSCIIDGRIEPLLATGFIEGQVLVPQFVLAELQQLADASNDQKRVRGRRGLDILGSIQADFPESIVIHSADYDDIATVDAKLVHLAQEINGILLTNDYNLSKVANLQKVQILNVNDLAQAVRPIYLPGDSLELKIIKQGKEASQGVGYLEDGTMVVVEEGRNYVGSELQVIVTSALQTSAGRMIFAKPPSVLAS.

The 113-residue stretch at valine 163–glutamine 275 folds into the PINc domain. The Mg(2+) site is built by aspartate 165 and aspartate 244. Residues isoleucine 289–phenylalanine 350 enclose the TRAM domain.

Belongs to the ycf81 family. This sequence in the central section; belongs to the PINc/VapC protein family. Mg(2+) is required as a cofactor.

Its function is as follows. An RNase. This is an uncharacterized protein from Synechocystis sp. (strain ATCC 27184 / PCC 6803 / Kazusa).